Consider the following 233-residue polypeptide: Fibrillarin-like rRNA/tRNA 2'-O-methyltransferase (233 aa).

Residues 89–90, 108–109, 133–134, and 153–156 each bind S-adenosyl-L-methionine; these read TT, EF, DA, and DIAQ.

Belongs to the methyltransferase superfamily. Fibrillarin family. As to quaternary structure, interacts with nop5. Component of box C/D small ribonucleoprotein (sRNP) particles that contain rpl7ae, FlpA and nop5, plus a guide RNA.

Involved in pre-rRNA and tRNA processing. Utilizes the methyl donor S-adenosyl-L-methionine to catalyze the site-specific 2'-hydroxyl methylation of ribose moieties in rRNA and tRNA. Site specificity is provided by a guide RNA that base pairs with the substrate. Methylation occurs at a characteristic distance from the sequence involved in base pairing with the guide RNA. This is Fibrillarin-like rRNA/tRNA 2'-O-methyltransferase from Sulfurisphaera tokodaii (strain DSM 16993 / JCM 10545 / NBRC 100140 / 7) (Sulfolobus tokodaii).